The primary structure comprises 89 residues: UPF0223 protein BCA_4066 (89 aa).

The protein belongs to the UPF0223 family.

The protein is UPF0223 protein BCA_4066 of Bacillus cereus (strain 03BB102).